The following is a 147-amino-acid chain: Nucleoside diphosphate kinase (147 aa).

Residues Lys-9, Phe-57, Arg-85, Thr-91, Arg-102, and Asn-112 each coordinate ATP. His-115 serves as the catalytic Pros-phosphohistidine intermediate.

This sequence belongs to the NDK family. Homotetramer. Mg(2+) serves as cofactor.

Its subcellular location is the cytoplasm. It catalyses the reaction a 2'-deoxyribonucleoside 5'-diphosphate + ATP = a 2'-deoxyribonucleoside 5'-triphosphate + ADP. It carries out the reaction a ribonucleoside 5'-diphosphate + ATP = a ribonucleoside 5'-triphosphate + ADP. Major role in the synthesis of nucleoside triphosphates other than ATP. The ATP gamma phosphate is transferred to the NDP beta phosphate via a ping-pong mechanism, using a phosphorylated active-site intermediate. The polypeptide is Nucleoside diphosphate kinase (Kosmotoga olearia (strain ATCC BAA-1733 / DSM 21960 / TBF 19.5.1)).